Reading from the N-terminus, the 655-residue chain is p-hydroxybenzoic acid efflux pump subunit AaeB (655 aa).

Topologically, residues 1-12 (MGIFSIANQHIR) are periplasmic. A helical transmembrane segment spans residues 13 to 33 (FAVKLACAIVLALFIGFHFQL). Residues 34-37 (ETPR) lie on the Cytoplasmic side of the membrane. A helical membrane pass occupies residues 38-58 (WAVLTAAIVAAGPAFAAGGEP). Residues 59 to 68 (YSGAIRYRGM) are Periplasmic-facing. The helical transmembrane segment at 69-89 (LRIIGTFIGCIAALIIIISMI) threads the bilayer. Topologically, residues 90–92 (RAP) are cytoplasmic. Residues 93–113 (LLMILVCCVWVGFCTWISSLV) form a helical membrane-spanning segment. The Periplasmic portion of the chain corresponds to 114–120 (RIENSYA). Residues 121–141 (WGLSGYTALIIVITIQTEPLL) form a helical membrane-spanning segment. Topologically, residues 142–151 (TPQFALERCS) are cytoplasmic. Residues 152 to 172 (EIVIGIGCAILADLLFSPRSI) traverse the membrane as a helical segment. Residues 173-369 (KQEVDRELDS…RTTLSCILGT (197 aa)) lie on the Periplasmic side of the membrane. Residues 370–390 (LFWLWTGWTSGNGEMVMIAVV) form a helical membrane-spanning segment. Over 391 to 406 (TSLAMRLPNPRMVCID) the chain is Cytoplasmic. The helical transmembrane segment at 407-427 (FIYGTLAALPLGLLYFLVIIP) threads the bilayer. Over 428–430 (NTQ) the chain is Periplasmic. A helical membrane pass occupies residues 431–451 (QSMLLLCLSLAVLGFFIGIEV). The Cytoplasmic portion of the chain corresponds to 452-458 (QKRRLGS). The chain crosses the membrane as a helical span at residues 459–479 (MGALASTINIIVLDNPMTFHF). The Periplasmic segment spans residues 480–481 (SQ). Residues 482-502 (FLDSALGQIVGCMLAFIVILL) form a helical membrane-spanning segment. The Cytoplasmic portion of the chain corresponds to 503-655 (VRDKSKDRTG…HKYQNALTDS (153 aa)).

The protein belongs to the aromatic acid exporter ArAE (TC 2.A.85) family.

The protein localises to the cell inner membrane. Functionally, forms an efflux pump with AaeA. Could function as a metabolic relief valve, allowing to eliminate certain compounds when they accumulate to high levels in the cell. The chain is p-hydroxybenzoic acid efflux pump subunit AaeB from Salmonella paratyphi A (strain ATCC 9150 / SARB42).